We begin with the raw amino-acid sequence, 157 residues long: NADH-quinone oxidoreductase subunit I (157 aa).

4Fe-4S ferredoxin-type domains are found at residues 47 to 78 (YLTK…VKPA) and 94 to 123 (SDFQ…LSNQ). The [4Fe-4S] cluster site is built by Cys58, Cys61, Cys64, Cys68, Cys103, Cys106, Cys109, and Cys113.

It belongs to the complex I 23 kDa subunit family. In terms of assembly, NDH-1 is composed of 14 different subunits. Subunits NuoA, H, J, K, L, M, N constitute the membrane sector of the complex. Requires [4Fe-4S] cluster as cofactor.

The protein localises to the cell inner membrane. The enzyme catalyses a quinone + NADH + 5 H(+)(in) = a quinol + NAD(+) + 4 H(+)(out). Functionally, NDH-1 shuttles electrons from NADH, via FMN and iron-sulfur (Fe-S) centers, to quinones in the respiratory chain. The immediate electron acceptor for the enzyme in this species is believed to be ubiquinone. Couples the redox reaction to proton translocation (for every two electrons transferred, four hydrogen ions are translocated across the cytoplasmic membrane), and thus conserves the redox energy in a proton gradient. This is NADH-quinone oxidoreductase subunit I (nuoI) from Protochlamydia amoebophila (strain UWE25).